Reading from the N-terminus, the 185-residue chain is Crossover junction endodeoxyribonuclease RuvC (185 aa).

Residues Asp-7, Glu-68, and Asp-141 contribute to the active site. Residues Asp-7, Glu-68, and Asp-141 each contribute to the Mg(2+) site.

It belongs to the RuvC family. As to quaternary structure, homodimer which binds Holliday junction (HJ) DNA. The HJ becomes 2-fold symmetrical on binding to RuvC with unstacked arms; it has a different conformation from HJ DNA in complex with RuvA. In the full resolvosome a probable DNA-RuvA(4)-RuvB(12)-RuvC(2) complex forms which resolves the HJ. The cofactor is Mg(2+).

It is found in the cytoplasm. It catalyses the reaction Endonucleolytic cleavage at a junction such as a reciprocal single-stranded crossover between two homologous DNA duplexes (Holliday junction).. Functionally, the RuvA-RuvB-RuvC complex processes Holliday junction (HJ) DNA during genetic recombination and DNA repair. Endonuclease that resolves HJ intermediates. Cleaves cruciform DNA by making single-stranded nicks across the HJ at symmetrical positions within the homologous arms, yielding a 5'-phosphate and a 3'-hydroxyl group; requires a central core of homology in the junction. The consensus cleavage sequence is 5'-(A/T)TT(C/G)-3'. Cleavage occurs on the 3'-side of the TT dinucleotide at the point of strand exchange. HJ branch migration catalyzed by RuvA-RuvB allows RuvC to scan DNA until it finds its consensus sequence, where it cleaves and resolves the cruciform DNA. This Helicobacter hepaticus (strain ATCC 51449 / 3B1) protein is Crossover junction endodeoxyribonuclease RuvC.